Consider the following 99-residue polypeptide: NADH-quinone oxidoreductase subunit K (99 aa).

Transmembrane regions (helical) follow at residues 2–22 (PVEY…LGVL), 28–48 (LILM…FLAF), and 60–80 (IAFF…AVVI).

This sequence belongs to the complex I subunit 4L family. As to quaternary structure, NDH-1 is composed of 14 different subunits. Subunits NuoA, H, J, K, L, M, N constitute the membrane sector of the complex.

The protein localises to the cell inner membrane. The catalysed reaction is a quinone + NADH + 5 H(+)(in) = a quinol + NAD(+) + 4 H(+)(out). Functionally, NDH-1 shuttles electrons from NADH, via FMN and iron-sulfur (Fe-S) centers, to quinones in the respiratory chain. The immediate electron acceptor for the enzyme in this species is believed to be ubiquinone. Couples the redox reaction to proton translocation (for every two electrons transferred, four hydrogen ions are translocated across the cytoplasmic membrane), and thus conserves the redox energy in a proton gradient. This chain is NADH-quinone oxidoreductase subunit K, found in Anaeromyxobacter dehalogenans (strain 2CP-1 / ATCC BAA-258).